The chain runs to 41 residues: Large ribosomal subunit protein bL36B (41 aa).

This sequence belongs to the bacterial ribosomal protein bL36 family.

This chain is Large ribosomal subunit protein bL36B, found in Neisseria meningitidis serogroup C (strain 053442).